Reading from the N-terminus, the 469-residue chain is Neuraminidase (469 aa).

The Intravirion portion of the chain corresponds to M1–T9. A helical transmembrane segment spans residues I10–V30. Positions G11 to V33 are involved in apical transport and lipid raft association. The Virion surface portion of the chain corresponds to T31 to I469. Residues H36–S88 are hypervariable stalk region. 3 N-linked (GlcNAc...) asparagine; by host glycosylation sites follow: N61, N70, and N86. Residues Q91–I469 form a head of neuraminidase region. Cystine bridges form between C92–C417, C124–C129, C183–C230, C232–C237, C278–C291, C280–C289, C318–C337, and C421–C447. R118 provides a ligand contact to substrate. N-linked (GlcNAc...) asparagine; by host glycosylation occurs at N146. D151 acts as the Proton donor/acceptor in catalysis. R152 contacts substrate. 2 N-linked (GlcNAc...) asparagine; by host glycosylation sites follow: N200 and N234. E276 to E277 provides a ligand contact to substrate. Position 292 (R292) interacts with substrate. Positions 293, 297, and 324 each coordinate Ca(2+). N329 is a glycosylation site (N-linked (GlcNAc...) asparagine; by host). R371 is a substrate binding site. A glycan (N-linked (GlcNAc...) asparagine; by host) is linked at N402. Y406 functions as the Nucleophile in the catalytic mechanism.

The protein belongs to the glycosyl hydrolase 34 family. In terms of assembly, homotetramer. The cofactor is Ca(2+). In terms of processing, N-glycosylated.

Its subcellular location is the virion membrane. The protein localises to the host apical cell membrane. The enzyme catalyses Hydrolysis of alpha-(2-&gt;3)-, alpha-(2-&gt;6)-, alpha-(2-&gt;8)- glycosidic linkages of terminal sialic acid residues in oligosaccharides, glycoproteins, glycolipids, colominic acid and synthetic substrates.. Its activity is regulated as follows. Inhibited by the neuraminidase inhibitors zanamivir (Relenza) and oseltamivir (Tamiflu). These drugs interfere with the release of progeny virus from infected cells and are effective against all influenza strains. Resistance to neuraminidase inhibitors is quite rare. Its function is as follows. Catalyzes the removal of terminal sialic acid residues from viral and cellular glycoconjugates. Cleaves off the terminal sialic acids on the glycosylated HA during virus budding to facilitate virus release. Additionally helps virus spread through the circulation by further removing sialic acids from the cell surface. These cleavages prevent self-aggregation and ensure the efficient spread of the progeny virus from cell to cell. Otherwise, infection would be limited to one round of replication. Described as a receptor-destroying enzyme because it cleaves a terminal sialic acid from the cellular receptors. May facilitate viral invasion of the upper airways by cleaving the sialic acid moieties on the mucin of the airway epithelial cells. Likely to plays a role in the budding process through its association with lipid rafts during intracellular transport. May additionally display a raft-association independent effect on budding. Plays a role in the determination of host range restriction on replication and virulence. Sialidase activity in late endosome/lysosome traffic seems to enhance virus replication. This chain is Neuraminidase, found in Influenza A virus (strain A/Niigata/137/1996 H3N2).